The chain runs to 609 residues: Phosphomethylpyrimidine synthase (609 aa).

Residues Asn219, Met248, Tyr277, His313, 333–335 (SRG), 374–377 (DGLR), and Glu413 each bind substrate. Residue His417 coordinates Zn(2+). Substrate is bound at residue Tyr440. Residue His481 participates in Zn(2+) binding. Residues Cys561, Cys564, and Cys569 each contribute to the [4Fe-4S] cluster site.

The protein belongs to the ThiC family. [4Fe-4S] cluster serves as cofactor.

It carries out the reaction 5-amino-1-(5-phospho-beta-D-ribosyl)imidazole + S-adenosyl-L-methionine = 4-amino-2-methyl-5-(phosphooxymethyl)pyrimidine + CO + 5'-deoxyadenosine + formate + L-methionine + 3 H(+). The protein operates within cofactor biosynthesis; thiamine diphosphate biosynthesis. Catalyzes the synthesis of the hydroxymethylpyrimidine phosphate (HMP-P) moiety of thiamine from aminoimidazole ribotide (AIR) in a radical S-adenosyl-L-methionine (SAM)-dependent reaction. In Deinococcus geothermalis (strain DSM 11300 / CIP 105573 / AG-3a), this protein is Phosphomethylpyrimidine synthase.